A 523-amino-acid polypeptide reads, in one-letter code: Transmembrane protein 266 (523 aa).

The Cytoplasmic portion of the chain corresponds to 1 to 94 (MTNPQPAIEG…VFLLSASLNS (94 aa)). A helical transmembrane segment spans residues 95–115 (FLVACVILVVILLTLELLIDI). Residues 116–121 (KLLQFS) are Extracellular-facing. A helical transmembrane segment spans residues 122-142 (SAFQFAGVIHWISLVILSVFF). The Cytoplasmic segment spans residues 143–161 (SETVLRIVVLGIWDYIENK). A helical membrane pass occupies residues 162-182 (IEVFDGAVIILSLAPMVASTV). At 183–191 (ANGPRSPWD) the chain is on the extracellular side. The helical transmembrane segment at 192 to 212 (AISLIIMLRIWRVKRVIDAYV) threads the bilayer. Residues 213–523 (LPVKLEMEMV…EQKLHRVPEA (311 aa)) are Cytoplasmic-facing. A coiled-coil region spans residues 218 to 270 (EMEMVIQQYEKAKVIQDEQLERLTQICQEQGFEIRQLRAHLAQQDLDLAAERE). The segment at 380–477 (SASRSSVTRA…PELEHRVSLF (98 aa)) is disordered. Over residues 382–397 (SRSSVTRAQSDSSQTL) the composition is skewed to low complexity. A compositionally biased stretch (polar residues) spans 398 to 411 (GSSMDCSTAREEPS). Over residues 421-430 (LPSQQQVEEA) the composition is skewed to pro residues.

As to quaternary structure, homodimer; disulfide-linked. Mainly expressed in the cerebellum. Also expressed in cerebral cortex, skeletal muscle and thyroid, but at much lower levels.

The protein resides in the cell membrane. It localises to the cell projection. Its subcellular location is the dendrite. The protein localises to the perikaryon. Voltage-sensor protein present on the post-synaptic side of glutamatergic mossy fibers and granule cells in the cerebellum. Despite the presence of a voltage-sensor segment, does not form a functional ion channel and its precise role remains unclear. Undergoes both rapid and slow structural rearrangements in response to changes in voltage. Contains a zinc-binding site that can regulate the slow conformational transition. This chain is Transmembrane protein 266, found in Homo sapiens (Human).